The chain runs to 1654 residues: Cortactin-binding protein 2 (1654 aa).

The tract at residues 1–31 (MATDGASCEPDFSRSPEDAAGATAEPAKKEF) is disordered. Residues 119–276 (RKMQERMSTQ…EQLKRGSDSK (158 aa)) are a coiled coil. Disordered stretches follow at residues 361 to 432 (SHGD…LHSP), 455 to 480 (GNANDPDQNGNTSQSPPSRDVSPTSR), and 495 to 596 (QALS…PQGN). The segment covering 368-379 (SSVPAAPTPSAS) has biased composition (low complexity). Composition is skewed to polar residues over residues 384–395 (NGPSTGSAPDPT) and 411–422 (QTPGTAAQSYSQ). Arg499 is subject to Asymmetric dimethylarginine. The span at 518-531 (DVSSHTPVSRTSLK) shows a compositional bias: polar residues. ANK repeat units lie at residues 710 to 740 (GRPTLLQQAAAQGNVTLLSMLLNEEGLDINY), 744 to 773 (DGHSALYSAAKNGHTDCVRLLLNAQAQVNA), 777 to 806 (NGFTPLCAAAAQGHFKCIELLIANDANINH), 810 to 839 (GGQTPLYLACKNGNNECIKLLLGAGSDRSV), 843 to 872 (DGWTPVHAAVDTGNVDNLKLLMYYEAPIPG), and 913 to 943 (EGWTAAHIAASKGFKNCLEILCRHRGLEPER). Positions 1454 to 1478 (GAWRKVSTSPRKKSGHFSSPVWNKP) are disordered. Ser1523 is modified (phosphoserine). Positions 1556–1654 (RRLHSSGNNP…KEEIWNLRKK (99 aa)) are disordered. Over residues 1581 to 1598 (KEVSPLSSHQTTECSNNK) the composition is skewed to polar residues. A compositionally biased stretch (low complexity) spans 1623-1637 (SQNTKRSSSSSNTRQ). Residues 1644–1654 (SKEEIWNLRKK) show a composition bias toward basic and acidic residues.

As to quaternary structure, interacts with CTTN/cortactin SH3 domain. Interacts with STRN, STRN4/zinedin and MOB4/phocein; this interactions mediate the association with the STRIPAK core complex and may regulate dendritic spine distribution of the STRIPAK complex in hippocampal neurons. Activation of glutamate receptors weakens the interaction with STRN and STRN4.

The protein resides in the cytoplasm. Its subcellular location is the cell cortex. It localises to the cell projection. The protein localises to the dendritic spine. In terms of biological role, regulates the dendritic spine distribution of CTTN/cortactin in hippocampal neurons, and thus controls dendritic spinogenesis and dendritic spine maintenance. Associates with the striatin-interacting phosphatase and kinase (STRIPAK) core complex to regulate dendritic spine distribution of the STRIPAK complex in hippocampal neurons. The sequence is that of Cortactin-binding protein 2 (CTTNBP2) from Atelerix albiventris (Middle-African hedgehog).